A 489-amino-acid chain; its full sequence is E3 ubiquitin-protein ligase RGLG1 (489 aa).

Residues 1–10 (MGGGNSKEES) show a composition bias toward basic and acidic residues. Positions 1–125 (MGGGNSKEES…SQSQVADRKK (125 aa)) are disordered. Gly-2 carries the N-myristoyl glycine lipid modification. Residues 11-23 (SSPSSSSWASHQS) are compositionally biased toward low complexity. Over residues 34 to 57 (YPPPPTYAPAPSPAPAPAPVPAPS) the composition is skewed to pro residues. The span at 58–75 (PASSYGPQYSQEGYASQP) shows a compositional bias: low complexity. Over residues 76–88 (NNPPPPTYAPAPS) the composition is skewed to pro residues. The VWFA domain occupies 156-376 (NLIVGIDFTK…KETEFALSAL (221 aa)). The segment at 446–479 (CPICLSNPKNMAFGCGHQTCCECGPDLKVCPICR) adopts an RING-type zinc-finger fold.

Interacts with the heterodimer UBC35/UEV1B. Interacts with ERF053. Interacts with PP2CA. Post-translationally, N-myristoylated. In terms of tissue distribution, ubiquitously expressed.

Its subcellular location is the cell membrane. It is found in the nucleus. It catalyses the reaction S-ubiquitinyl-[E2 ubiquitin-conjugating enzyme]-L-cysteine + [acceptor protein]-L-lysine = [E2 ubiquitin-conjugating enzyme]-L-cysteine + N(6)-ubiquitinyl-[acceptor protein]-L-lysine.. Functionally, E3 ubiquitin-protein ligase that mediates the formation of 'Lys-63'-linked ubiquitin chains. Regulates apical dominance by acting on the auxin transport proteins abundance. Together with RGLG5, mediates the ubiquitination and subsequent proteasomal degradation of the target protein PP2CA. Functions as a positive regulator of abscisic acid (ABA) signaling through ABA-dependent degradation of PP2CA, a major inhibitor of ABA signaling. Acts as a negative regulator of drought stress response. The protein is E3 ubiquitin-protein ligase RGLG1 of Arabidopsis thaliana (Mouse-ear cress).